The sequence spans 785 residues: AP-1 complex subunit gamma-like 2 (785 aa).

The interval 369–379 is essential for ubiquitin-binding; sequence LSLALVNSSNV. The segment at 592–617 is disordered; sequence GPQADEEAKESKEAAQLSEAAPVPTE. The 116-residue stretch at 665–780 folds into the GAE domain; the sequence is APIPDLKVFE…QEIFEVNNLP (116 aa).

This sequence belongs to the adaptor complexes large subunit family. May interact with AP1S1/Sigma1A-adaptin and AP1S2/Sigma1B-adaptin. Probably does not interact with APB1. Interacts (via GAE domain) with RABEP1, NECAP1, CLINT1 and AFTPH/aftiphilin. As to quaternary structure, (Microbial infection) Interacts with HBV major surface antigen L. Interacts with HBV core protein C in a ubiquitin-dependent manner. In terms of tissue distribution, expressed in all but one (skeletal muscle) tissues examined.

The protein localises to the golgi apparatus membrane. It is found in the cytoplasmic vesicle membrane. Its subcellular location is the endosome membrane. In terms of biological role, may function in protein sorting in late endosomes or multivesucular bodies (MVBs). (Microbial infection) Involved in MVB-assisted maturation of hepatitis B virus (HBV). The sequence is that of AP-1 complex subunit gamma-like 2 (AP1G2) from Homo sapiens (Human).